The chain runs to 245 residues: Carbohydrate deacetylase (245 aa).

Mg(2+) is bound by residues H61 and H122.

It belongs to the YdjC deacetylase family. Requires Mg(2+) as cofactor.

In terms of biological role, probably catalyzes the deacetylation of acetylated carbohydrates an important step in the degradation of oligosaccharides. In Geobacillus stearothermophilus (Bacillus stearothermophilus), this protein is Carbohydrate deacetylase (celC).